The sequence spans 697 residues: Hormonally up-regulated neu tumor-associated kinase homolog (697 aa).

One can recognise a Protein kinase domain in the interval 55-313 (YLIGRKLGEG…IQQALANRWL (259 aa)). ATP-binding positions include 61 to 69 (LGEGSFAKV) and K84. D179 acts as the Proton acceptor in catalysis. Basic and acidic residues-rich tracts occupy residues 405–424 (KMNK…KRGE) and 460–473 (PVKE…ERES). 2 disordered regions span residues 405–480 (KMNK…LSPF) and 586–642 (DNTS…NCVR). Positions 586-600 (DNTSPIKGHSNQASF) are enriched in polar residues. Residues 607–626 (SPSSPESMSPTSPHSPHSPS) show a composition bias toward low complexity. The segment covering 627 to 637 (CNNNISGNLGS) has biased composition (polar residues).

The protein belongs to the protein kinase superfamily. CAMK Ser/Thr protein kinase family. SNF1 subfamily.

It carries out the reaction L-seryl-[protein] + ATP = O-phospho-L-seryl-[protein] + ADP + H(+). The enzyme catalyses L-threonyl-[protein] + ATP = O-phospho-L-threonyl-[protein] + ADP + H(+). The sequence is that of Hormonally up-regulated neu tumor-associated kinase homolog (hunk) from Xenopus tropicalis (Western clawed frog).